The chain runs to 120 residues: Nitrogen regulatory protein GlnK1 (120 aa).

ADP-binding positions include T40, 48-50 (GEQ), V75, and 98-101 (GDGR). Residues T40, 48 to 50 (GEQ), V75, and 98 to 101 (GDGR) each bind ATP.

The protein belongs to the P(II) protein family. As to quaternary structure, homotrimer. Interacts and forms a complex with Amt1.

Its subcellular location is the cytoplasm. In terms of biological role, involved in the regulation of nitrogen metabolism. Regulates the activity of its targets by protein-protein interaction in response to the nitrogen status of the cell. Regulates the activity of the ammonia channel Amt1 via direct interaction. The chain is Nitrogen regulatory protein GlnK1 from Archaeoglobus fulgidus (strain ATCC 49558 / DSM 4304 / JCM 9628 / NBRC 100126 / VC-16).